We begin with the raw amino-acid sequence, 207 residues long: dTTP/UTP pyrophosphatase (207 aa).

Asp68 serves as the catalytic Proton acceptor.

This sequence belongs to the Maf family. YhdE subfamily. The cofactor is a divalent metal cation.

Its subcellular location is the cytoplasm. It carries out the reaction dTTP + H2O = dTMP + diphosphate + H(+). The enzyme catalyses UTP + H2O = UMP + diphosphate + H(+). Functionally, nucleoside triphosphate pyrophosphatase that hydrolyzes dTTP and UTP. May have a dual role in cell division arrest and in preventing the incorporation of modified nucleotides into cellular nucleic acids. This chain is dTTP/UTP pyrophosphatase, found in Staphylothermus marinus (strain ATCC 43588 / DSM 3639 / JCM 9404 / F1).